The sequence spans 443 residues: Phosphomevalonate kinase ERG8 (443 aa).

160-170 (ANKTGLGSSAA) provides a ligand contact to ATP.

Belongs to the GHMP kinase family. Mevalonate kinase subfamily.

It carries out the reaction (R)-5-phosphomevalonate + ATP = (R)-5-diphosphomevalonate + ADP. Its pathway is isoprenoid biosynthesis; isopentenyl diphosphate biosynthesis via mevalonate pathway; isopentenyl diphosphate from (R)-mevalonate: step 2/3. Its function is as follows. Phosphomevalonate kinase; part of the second module of ergosterol biosynthesis pathway that includes the middle steps of the pathway. ERG8 converts 5-phosphomevalonate to 5-diphosphomevalonate. The second module is carried out in the vacuole and involves the formation of farnesyl diphosphate, which is also an important intermediate in the biosynthesis of ubiquinone, dolichol, heme and prenylated proteins. Activity by the mevalonate kinase ERG12 (FG05912) first converts mevalonate into 5-phosphomevalonate. 5-phosphomevalonate is then further converted to 5-diphosphomevalonate by the phosphomevalonate kinase ERG8 (FG09764). The diphosphomevalonate decarboxylase ERG19 (FG10424) then produces isopentenyl diphosphate. The isopentenyl-diphosphate delta-isomerase IDI1 (FG09722) then catalyzes the 1,3-allylic rearrangement of the homoallylic substrate isopentenyl (IPP) to its highly electrophilic allylic isomer, dimethylallyl diphosphate (DMAPP). Finally the farnesyl diphosphate synthase ERG20 (FG06784) catalyzes the sequential condensation of isopentenyl pyrophosphate with dimethylallyl pyrophosphate, and then with the resultant geranylpyrophosphate to the ultimate product farnesyl pyrophosphate. This Gibberella zeae (strain ATCC MYA-4620 / CBS 123657 / FGSC 9075 / NRRL 31084 / PH-1) (Wheat head blight fungus) protein is Phosphomevalonate kinase ERG8.